The chain runs to 378 residues: Stimulator of interferon genes protein (378 aa).

Residues 1-17 (MPYSNLHPAIPRPRGHR) lie on the Cytoplasmic side of the membrane. The mediates interaction with ZDHHC1 and ZDHHC11 stretch occupies residues 1–189 (MPYSNLHPAI…MFNQLHNNML (189 aa)). A helical transmembrane segment spans residues 18–34 (SKYVALIFLVASLMILW). Residue Lys19 forms a Glycyl lysine isopeptide (Lys-Gly) (interchain with G-Cter in ubiquitin) linkage. Over 35 to 44 (VAKDPPNHTL) the chain is Lumenal. The chain crosses the membrane as a helical span at residues 45 to 69 (KYLALHLASHELGLLLKNLCCLAEE). Residues 70 to 91 (LCHVQSRYQGSYWKAVRACLGC) lie on the Cytoplasmic side of the membrane. 2 S-palmitoyl cysteine lipidation sites follow: Cys88 and Cys91. A helical membrane pass occupies residues 92-106 (PIHCMAMILLSSYFY). Over 107 to 115 (FLQNTADIY) the chain is Lumenal. A helical transmembrane segment spans residues 116–133 (LSWMFGLLVLYKSLSMLL). Residues 134–378 (GLQSLTPAEV…QPLPLRTDLI (245 aa)) are Cytoplasmic-facing. A Glycyl lysine isopeptide (Lys-Gly) (interchain with G-Cter in ubiquitin) cross-link involves residue Lys150. A cyclic dinucleotide-binding domain (CBD) region spans residues 152-339 (LNVAHGLAWS…RHIRQEEKEE (188 aa)). Residue Gly165 participates in 3',3'-c-di-GMP binding. Tyr166 serves as a coordination point for 2',3'-cUAMP. Tyr166 contacts 3',3'-cGAMP. Residue Lys235 forms a Glycyl lysine isopeptide (Lys-Gly) (interchain with G-Cter in ubiquitin) linkage. 2',3'-cUAMP is bound at residue Arg237. A 3',3'-cGAMP-binding site is contributed by Arg237. Arg237 contributes to the 2',3'-cGAMP binding site. Residues 237–240 (RVYS) and Thr262 each bind 3',3'-c-di-GMP. Ser240 carries the phosphoserine modification. A 2',3'-cUAMP-binding site is contributed by Thr262. Thr262 serves as a coordination point for 2',3'-cGAMP. Residue Lys337 forms a Glycyl lysine isopeptide (Lys-Gly) (interchain with G-Cter in SUMO) linkage. The tract at residues 339–378 (EVTMNAPMTSVAPPPSVLSQEPRLLISGMDQPLPLRTDLI) is C-terminal tail (CTT). Ser354 is subject to Phosphoserine; by MAP3K7. Phosphoserine; by TBK1 occurs at positions 357 and 365. Residues 362–365 (LLIS) carry the pLxIS motif motif.

This sequence belongs to the STING family. As to quaternary structure, homodimer; forms a homodimer in absence of cyclic nucleotide (c-di-GMP or cGAMP); 'Lys-63'-linked ubiquitination at Lys-150 is required for homodimerization. Homotetramer; in presence of cyclic nucleotide (c-di-GMP or cGAMP), forms tetramers and higher-order oligomers through side-by-side packing. Interacts (when phosphorylated) with IRF3; following activation and phosphorylation on the pLxIS motif by TBK1, recruits IRF3. Interacts with RIGI, MAVS and SSR2. Interacts with RNF5 and TRIM56. Interacts with TBK1; when homodimer, leading to subsequent production of IFN-beta. Interacts with IFIT1 and IFIT2. Interacts with TRIM29; this interaction induces STING1 ubiquitination and subsequent degradation. Associates with the MHC-II complex. Interacts with STEEP1; interaction takes place upon cGAMP-activation and STING1 phosphorylation by MAP3K7/TAK1 and promotes STING1 translocation to COPII vesicles. Interacts with SEC24A, SEC24B and SEC24C; promoting translocation to COPII vesicles. Interacts (when ubiquitinated) with SQSTM1; leading to relocalization to autophagosomes. Interacts with SURF4. Interacts with HNRNPA2B1. Interacts with ZDHHC1; ZDHHC1 constitutively interacts with STING1 and in presence of DNA viruses activates it by promoting its cGAMP-induced oligomerization and the recruitment of downstream signaling components. Interacts with ZDHHC11; in presence of DNA viruses promotes the recruitment of IRF3 to STING1. Interacts with TOMM70. Interacts with IFI204. Interacts with TAB1; promoting recruitment of TAB1 to the endoplasmic reticulum membrane and subsequent activation of MAP3K7/TAK1. Interacts (via transmembrane domain) with TMEM203. Interacts with DDX41. In terms of processing, phosphorylation by TBK1 leads to activation and production of IFN-beta. Following cyclic nucleotide (c-di-GMP or cGAMP)-binding, activation and translocation from the endoplasmic reticulum, STING1 is phosphorylated by TBK1 at Ser-365 in the pLxIS motif. The phosphorylated pLxIS motif constitutes an IRF3-binding motif, leading to recruitment of the transcription factor IRF3 to induce type-I interferons and other cytokines. The phosphorylated pLxIS motif facilitates SENP2 recruitment during late phase of viral infection. Phosphorylated on tyrosine residues upon MHC-II aggregation. Dephosphorylation by PPP6C leads to inactivation and decreased production of IFN-beta. Phosphorylation at Ser-357 is also required to activate IRF3. Phosphorylation at Ser-354 by MAP3K7/TAK1 facilitates its interaction with STEEP1, promoting STING1 translocation to COPII vesicles. Ubiquitinated. Ubiquitinated via 'Lys-63'-linked ubiquitin chains in response to double-stranded DNA treatment, leading to relocalization to autophagosomes and subsequent degradation; this process is dependent on SQSTM1. 'Lys-63'-linked ubiquitination mediated by TRIM56 at Lys-150 promotes homodimerization and recruitment of the antiviral kinase TBK1 and subsequent production of IFN-beta. 'Lys-48'-linked polyubiquitination at Lys-150 occurring after viral infection is mediated by RNF5 and leads to proteasomal degradation. 'Lys-11'-linked polyubiquitination at Lys-150 by RNF26 leads to stabilize STING1: it protects STING1 from RNF5-mediated 'Lys-48'-linked polyubiquitination. 'Lys-33'-linked and 'Lys-48'-linked deubiquitinated by USP20; leading to its stabilization and promotion of innate antiviral response. 'Lys-48'-linked deubiquitinated by USP44; leading to its stabilization and promotion of innate antiviral response. Deubiquitinated by USP13; leading to inhibition of innate antiviral response. 'Lys-63'-linked deubiquitinated by USP49; leading to inhibition of the subsequent recruitment of TBK1 to the signaling complex. 'Lys-63'-linked ubiquitination mediated by RNF39 promotes the activation of the cGAS-STING pathway. MARCHF5-mediated ubiquitination prevents the oxidation-induced polymer formation. Post-translationally, sumoylated at Lys-337 by TRIM38 during the early phase of viral infection, promoting its stability by preventing its relocalization to autophagosomes and subsequent degradation. Desumoylated by SENP2 during the late phase of viral infection. In terms of processing, palmitoylation takes place in the Golgi apparatus and creates a platform for the recruitment of TBK1. As to expression, present in spleen and thymus tissue. Also present in dendritic cells (at protein level).

It is found in the endoplasmic reticulum membrane. Its subcellular location is the cytoplasm. The protein resides in the perinuclear region. It localises to the endoplasmic reticulum-Golgi intermediate compartment membrane. The protein localises to the golgi apparatus membrane. It is found in the cytoplasmic vesicle. Its subcellular location is the autophagosome membrane. The protein resides in the mitochondrion outer membrane. It localises to the cell membrane. The protein localises to the lysosome membrane. The enzyme catalyses H(+)(in) = H(+)(out). With respect to regulation, activated by anticancer drug 5,6-dimethylxanthenone 4-acetic acid (DMXAA). Specifically inhibited by nitrofuran derivatives C-178 and C-176, which covalently bind Cys-91 and prevent palmitoylation and subsequent activation od STING1. Its function is as follows. Facilitator of innate immune signaling that acts as a sensor of cytosolic DNA from bacteria and viruses and promotes the production of type I interferon (IFN-alpha and IFN-beta). Innate immune response is triggered in response to non-CpG double-stranded DNA from viruses and bacteria delivered to the cytoplasm. Acts by binding cyclic dinucleotides: recognizes and binds cyclic di-GMP (c-di-GMP), a second messenger produced by bacteria, cyclic UMP-AMP (2',3'-cUAMP), and cyclic GMP-AMP (cGAMP), a messenger produced by CGAS in response to DNA virus in the cytosol. Upon binding to c-di-GMP, cUAMP or cGAMP, STING1 oligomerizes, translocates from the endoplasmic reticulum and is phosphorylated by TBK1 on the pLxIS motif, leading to recruitment and subsequent activation of the transcription factor IRF3 to induce expression of type I interferon and exert a potent anti-viral state. Exhibits 2',3' phosphodiester linkage-specific ligand recognition: can bind both 2'-3' linked cGAMP (2'-3'-cGAMP) and 3'-3' linked cGAMP but is preferentially activated by 2'-3' linked cGAMP. The preference for 2'-3'-cGAMP, compared to other linkage isomers is probably due to the ligand itself, whichs adopts an organized free-ligand conformation that resembles the STING1-bound conformation and pays low energy costs in changing into the active conformation. In addition to promote the production of type I interferons, plays a direct role in autophagy. Following cGAMP-binding, STING1 buds from the endoplasmic reticulum into COPII vesicles, which then form the endoplasmic reticulum-Golgi intermediate compartment (ERGIC). The ERGIC serves as the membrane source for WIPI2 recruitment and LC3 lipidation, leading to formation of autophagosomes that target cytosolic DNA or DNA viruses for degradation by the lysosome. Promotes autophagy by acting as a proton channel that directs proton efflux from the Golgi to facilitate MAP1LC3B/LC3B lipidation. The autophagy- and interferon-inducing activities can be uncoupled and autophagy induction is independent of TBK1 phosphorylation. Autophagy is also triggered upon infection by bacteria: following c-di-GMP-binding, which is produced by live Gram-positive bacteria, promotes reticulophagy. May be involved in translocon function, the translocon possibly being able to influence the induction of type I interferons. May be involved in transduction of apoptotic signals via its association with the major histocompatibility complex class II (MHC-II). This chain is Stimulator of interferon genes protein, found in Mus musculus (Mouse).